Here is an 846-residue protein sequence, read N- to C-terminus: Aminopeptidase N (846 aa).

Substrate contacts are provided by residues Glu-120 and 252-256; that span reads GAMEN. His-288 contributes to the Zn(2+) binding site. The active-site Proton acceptor is Glu-289. Residues His-292 and Glu-311 each coordinate Zn(2+).

Belongs to the peptidase M1 family. Monomer. It depends on Zn(2+) as a cofactor.

The protein localises to the cytoplasm. The enzyme catalyses Release of an N-terminal amino acid, Xaa-|-Yaa- from a peptide, amide or arylamide. Xaa is preferably Ala, but may be most amino acids including Pro (slow action). When a terminal hydrophobic residue is followed by a prolyl residue, the two may be released as an intact Xaa-Pro dipeptide.. Functionally, aminopeptidase with broad substrate specificity to several peptides. It has more affinity for oligopeptides than for dipeptides. It plays an essential role in the metabolism, it may be involved in nitrogen supply or protein turnover. In Lactococcus lactis subsp. lactis (strain IL1403) (Streptococcus lactis), this protein is Aminopeptidase N (pepN).